The chain runs to 255 residues: MAVTDRFARRATLSRSLRLLSEFRYEQPDPARFYGALAADTATLVSDLWLAARGESVAGRTLLDVGGGPGYFASAFAAAGVGYIGVEPDPNEMHAAGPAHAGGPGSFVRASGMALPFADDSVDICLSSNVAEHVPRPWQLGAEMLRVTRPGGLAVLSYTVWLGPFGGHEMGLSHYLGGARAAARYARRHGHPAKNNYGSSLFAVSAAEGLRWAEGTGTLIAAFPRYHPRWAWWMTSVPMLREFLVSNLVLVLSPR.

Belongs to the methyltransferase superfamily.

This is an uncharacterized protein from Mycobacterium marinum (strain ATCC BAA-535 / M).